The following is a 78-amino-acid chain: uncharacterized protein (78 aa).

The first 22 residues, 1 to 22 (MFKKSVLFATLLSGVMAFSTNA), serve as a signal peptide directing secretion.

This sequence belongs to the BhsA/McbA family.

It is found in the periplasm. Its function is as follows. Probably involved in reactive chlorine species (RCS) stress resistance. This is an uncharacterized protein from Escherichia coli (strain K12).